Here is a 163-residue protein sequence, read N- to C-terminus: Interleukin-17F (163 aa).

The signal sequence occupies residues 1–30 (MTVKTLHGPAMVKYLLLSILGLAFLSEAAA). Asparagine 83 is a glycosylation site (N-linked (GlcNAc...) asparagine). Cystine bridges form between cysteine 102/cysteine 152 and cysteine 107/cysteine 154.

This sequence belongs to the IL-17 family. As to quaternary structure, homodimer; disulfide-linked. Heterodimer with IL17A (IL17A-IL17F). Forms complexes with IL17RA and IL17RC receptors with 2:1 binding stoichiometry: two receptor chains for one interleukin molecule. IL17F homodimer forms predominantly complexes with IL17RC homodimer, whereas IL17A-IL17F favors complexes with IL17RA-IL17RC. IL17RA and IL17RC chains cannot distinguish between IL17A and IL17F molecules, potentially enabling the formation of topologically distinct complexes. Expressed in T-helper 1 and T-helper 2 cells, basophils and mast cells.

The protein localises to the secreted. Its function is as follows. Effector cytokine of innate and adaptive immune system involved in antimicrobial host defense and maintenance of tissue integrity. IL17A-IL17F signals via IL17RA-IL17RC heterodimeric receptor complex, triggering homotypic interaction of IL17RA and IL17RC chains with TRAF3IP2 adapter through SEFIR domains. This leads to downstream TRAF6-mediated activation of NF-kappa-B and MAPkinase pathways ultimately resulting in transcriptional activation of cytokines, chemokines, antimicrobial peptides and matrix metalloproteinases, with potential strong immune inflammation. IL17A-IL17F is primarily involved in host defense against extracellular bacteria and fungi by inducing neutrophilic inflammation. As signature effector cytokine of T-helper 17 cells (Th17), primarily induces neutrophil activation and recruitment at infection and inflammatory sites. Stimulates the production of antimicrobial beta-defensins DEFB1, DEFB103A, and DEFB104A by mucosal epithelial cells, limiting the entry of microbes through the epithelial barriers. IL17F homodimer can signal via IL17RC homodimeric receptor complex, triggering downstream activation of TRAF6 and NF-kappa-B signaling pathway. Via IL17RC induces transcriptional activation of IL33, a potent cytokine that stimulates group 2 innate lymphoid cells and adaptive T-helper 2 cells involved in pulmonary allergic response to fungi. Likely via IL17RC, promotes sympathetic innervation of peripheral organs by coordinating the communication between gamma-delta T cells and parenchymal cells. Stimulates sympathetic innervation of thermogenic adipose tissue by driving TGFB1 expression. Regulates the composition of intestinal microbiota and immune tolerance by inducing antimicrobial proteins that specifically control the growth of commensal Firmicutes and Bacteroidetes. The polypeptide is Interleukin-17F (IL17F) (Homo sapiens (Human)).